Here is a 424-residue protein sequence, read N- to C-terminus: Imidazolonepropionase (424 aa).

2 residues coordinate Fe(3+): His81 and His83. Zn(2+) contacts are provided by His81 and His83. Arg90, Tyr153, and His186 together coordinate 4-imidazolone-5-propanoate. Tyr153 lines the N-formimidoyl-L-glutamate pocket. His251 provides a ligand contact to Fe(3+). Residue His251 participates in Zn(2+) binding. Residue Glu254 coordinates 4-imidazolone-5-propanoate. Asp325 is a binding site for Fe(3+). Position 325 (Asp325) interacts with Zn(2+). Residues Asn327 and Gly329 each coordinate N-formimidoyl-L-glutamate. Residue Thr330 participates in 4-imidazolone-5-propanoate binding.

It belongs to the metallo-dependent hydrolases superfamily. HutI family. It depends on Zn(2+) as a cofactor. Requires Fe(3+) as cofactor.

The protein localises to the cytoplasm. The catalysed reaction is 4-imidazolone-5-propanoate + H2O = N-formimidoyl-L-glutamate. Its pathway is amino-acid degradation; L-histidine degradation into L-glutamate; N-formimidoyl-L-glutamate from L-histidine: step 3/3. Its function is as follows. Catalyzes the hydrolytic cleavage of the carbon-nitrogen bond in imidazolone-5-propanoate to yield N-formimidoyl-L-glutamate. It is the third step in the universal histidine degradation pathway. The protein is Imidazolonepropionase of Syntrophobacter fumaroxidans (strain DSM 10017 / MPOB).